Here is a 307-residue protein sequence, read N- to C-terminus: Elongation factor Ts (307 aa).

Residues 80–83 form an involved in Mg(2+) ion dislocation from EF-Tu region; sequence TDFV.

The protein belongs to the EF-Ts family.

The protein resides in the cytoplasm. Functionally, associates with the EF-Tu.GDP complex and induces the exchange of GDP to GTP. It remains bound to the aminoacyl-tRNA.EF-Tu.GTP complex up to the GTP hydrolysis stage on the ribosome. The protein is Elongation factor Ts of Clostridium botulinum (strain Kyoto / Type A2).